The chain runs to 232 residues: UPF0758 protein Amet_2289 (232 aa).

One can recognise an MPN domain in the interval R110–M232. The Zn(2+) site is built by H181, H183, and D194. The JAMM motif signature appears at H181–D194.

It belongs to the UPF0758 family.

This is UPF0758 protein Amet_2289 from Alkaliphilus metalliredigens (strain QYMF).